A 953-amino-acid polypeptide reads, in one-letter code: Mannosylglycoprotein endo-beta-mannosidase (953 aa).

The active-site Proton donor is Glu461. Glu553 (nucleophile) is an active-site residue.

It belongs to the glycosyl hydrolase 2 family. In terms of assembly, heterotrimer of 31 kDa, 28 kDa and 42 kDa subunits. The mature enzyme is proteotically cleaved into 3 subunits of 31 kDa, 28 kDa and 42 kDa. As to expression, ubiquitously expressed.

It catalyses the reaction Hydrolysis of the alpha-D-mannosyl-(1-&gt;6)-beta-D-mannosyl-(1-&gt;4)-N-acetyl-beta-D-glucosaminyl-(1-&gt;4)-N-acetyl-beta-D-glucosaminyl sequence of glycoprotein to alpha-D-mannosyl-(1-&gt;6)-D-mannose and N-acetyl-beta-D-glucosaminyl-(1-&gt;4)-N-acetyl-beta-D-glucosaminyl sequences.. Its function is as follows. Glycosidase that specifically hydrolyzes the Man-beta-1,4-GlcNAc linkage in the trimannosyl core structure of N-glycans. Does not hydrolyzes pyridylamino derivatives sugar chains containing Man-alpha-1,3-Man-beta or Xylose-beta-1,2-Man-beta. The polypeptide is Mannosylglycoprotein endo-beta-mannosidase (EBM) (Lilium longiflorum (Trumpet lily)).